We begin with the raw amino-acid sequence, 1164 residues long: DNA-directed RNA polymerase subunit beta (1164 aa).

Disordered stretches follow at residues 975-994 (RSSLPNRDGERQVDDFGKSN) and 1143-1164 (ANAALGINLSRDERPDADMDVS). Basic and acidic residues-rich tracts occupy residues 981–991 (RDGERQVDDFG) and 1152–1164 (SRDERPDADMDVS).

It belongs to the RNA polymerase beta chain family. As to quaternary structure, the RNAP catalytic core consists of 2 alpha, 1 beta, 1 beta' and 1 omega subunit. When a sigma factor is associated with the core the holoenzyme is formed, which can initiate transcription.

The catalysed reaction is RNA(n) + a ribonucleoside 5'-triphosphate = RNA(n+1) + diphosphate. In terms of biological role, DNA-dependent RNA polymerase catalyzes the transcription of DNA into RNA using the four ribonucleoside triphosphates as substrates. This is DNA-directed RNA polymerase subunit beta from Corynebacterium jeikeium (strain K411).